The following is a 510-amino-acid chain: GMP synthase [glutamine-hydrolyzing] (510 aa).

The 191-residue stretch at 5-195 (LVIVVDFGGQ…LFDICNLKGD (191 aa)) folds into the Glutamine amidotransferase type-1 domain. Cys-82 (nucleophile) is an active-site residue. Active-site residues include His-169 and Glu-171. Positions 196-385 (WSMSSFVDEK…LGIPHKLVWR (190 aa)) constitute a GMPS ATP-PPase domain. Residue 223–229 (SGGVDSS) coordinates ATP.

Homodimer.

It catalyses the reaction XMP + L-glutamine + ATP + H2O = GMP + L-glutamate + AMP + diphosphate + 2 H(+). It participates in purine metabolism; GMP biosynthesis; GMP from XMP (L-Gln route): step 1/1. Catalyzes the synthesis of GMP from XMP. This is GMP synthase [glutamine-hydrolyzing] from Clostridium kluyveri (strain NBRC 12016).